The following is a 202-amino-acid chain: IMP cyclohydrolase (202 aa).

Belongs to the archaeal IMP cyclohydrolase family.

It catalyses the reaction IMP + H2O = 5-formamido-1-(5-phospho-D-ribosyl)imidazole-4-carboxamide. The protein operates within purine metabolism; IMP biosynthesis via de novo pathway; IMP from 5-formamido-1-(5-phospho-D-ribosyl)imidazole-4-carboxamide: step 1/1. Functionally, catalyzes the cyclization of 5-formylamidoimidazole-4-carboxamide ribonucleotide to IMP. The chain is IMP cyclohydrolase from Methanosphaera stadtmanae (strain ATCC 43021 / DSM 3091 / JCM 11832 / MCB-3).